A 328-amino-acid chain; its full sequence is Anthranilate phosphoribosyltransferase (328 aa).

5-phospho-alpha-D-ribose 1-diphosphate is bound by residues Gly-79, 82–83 (GD), Thr-87, 89–92 (NIST), 107–115 (KHGNYAVSS), and Ser-119. Gly-79 is an anthranilate binding site. Residue Ser-91 coordinates Mg(2+). Asn-110 is an anthranilate binding site. Anthranilate is bound at residue Arg-165. Mg(2+) contacts are provided by Asp-223 and Glu-224.

It belongs to the anthranilate phosphoribosyltransferase family. Homodimer. Requires Mg(2+) as cofactor.

The enzyme catalyses N-(5-phospho-beta-D-ribosyl)anthranilate + diphosphate = 5-phospho-alpha-D-ribose 1-diphosphate + anthranilate. Its pathway is amino-acid biosynthesis; L-tryptophan biosynthesis; L-tryptophan from chorismate: step 2/5. Functionally, catalyzes the transfer of the phosphoribosyl group of 5-phosphorylribose-1-pyrophosphate (PRPP) to anthranilate to yield N-(5'-phosphoribosyl)-anthranilate (PRA). The sequence is that of Anthranilate phosphoribosyltransferase from Cytophaga hutchinsonii (strain ATCC 33406 / DSM 1761 / CIP 103989 / NBRC 15051 / NCIMB 9469 / D465).